Consider the following 886-residue polypeptide: DNA double-strand break repair Rad50 ATPase (886 aa).

Residues 32-38 (NGAGKSS) and Q137 each bind ATP. Coiled-coil stretches lie at residues 181 to 240 (IRSL…KEIK) and 320 to 416 (RKKE…GDLN). A Zinc-hook domain is found at 391-489 (IKDVSDRINQ…EREELEATRN (99 aa)). Zn(2+) is bound by residues C437 and C440. Coiled-coil stretches lie at residues 450 to 657 (AKIR…ISEL) and 682 to 718 (EADK…EESK).

Belongs to the SMC family. RAD50 subfamily. As to quaternary structure, homodimer. Forms a heterotetramer composed of two Mre11 subunits and two Rad50 subunits. Interacts with Mre11 and HerA. Zn(2+) serves as cofactor.

Part of the Rad50/Mre11 complex, which is involved in the early steps of DNA double-strand break (DSB) repair. The complex may facilitate opening of the processed DNA ends to aid in the recruitment of HerA and NurA. Rad50 controls the balance between DNA end bridging and DNA resection via ATP-dependent structural rearrangements of the Rad50/Mre11 complex. This is DNA double-strand break repair Rad50 ATPase from Sulfolobus acidocaldarius (strain ATCC 33909 / DSM 639 / JCM 8929 / NBRC 15157 / NCIMB 11770).